A 901-amino-acid polypeptide reads, in one-letter code: HTH-type transcriptional regulator MalT (901 aa).

Residue 39–46 coordinates ATP; sequence SPAGYGKT. Residues 829–894 enclose the HTH luxR-type domain; it reads ELIRTSPLTQ…AAVQHAQKLL (66 aa). Positions 853 to 872 form a DNA-binding region, H-T-H motif; it reads NEQIAGELEVAATTIKTHIR.

This sequence belongs to the MalT family. In terms of assembly, monomer in solution. Oligomerizes to an active state in the presence of the positive effectors ATP and maltotriose.

Activated by ATP and maltotriose, which are both required for DNA binding. Positively regulates the transcription of the maltose regulon whose gene products are responsible for uptake and catabolism of malto-oligosaccharides. Specifically binds to the promoter region of its target genes, recognizing a short DNA motif called the MalT box. The protein is HTH-type transcriptional regulator MalT of Escherichia coli O7:K1 (strain IAI39 / ExPEC).